The sequence spans 177 residues: Outer membrane lipoprotein Blc (177 aa).

The signal sequence occupies residues 1–18 (MRLLPLVAAATAAFLVVA). C19 carries the N-palmitoyl cysteine lipid modification. C19 is lipidated: S-diacylglycerol cysteine.

This sequence belongs to the calycin superfamily. Lipocalin family. As to quaternary structure, homodimer.

It is found in the cell outer membrane. Involved in the storage or transport of lipids necessary for membrane maintenance under stressful conditions. Displays a binding preference for lysophospholipids. This chain is Outer membrane lipoprotein Blc (blc), found in Escherichia coli O157:H7.